The following is a 215-amino-acid chain: Protein ERP2 (215 aa).

Positions 1–25 are cleaved as a signal peptide; sequence MIKSTIALPSFFIVLILALVNSVAA. Topologically, residues 26–182 are lumenal; sequence SSSYAPVAIS…TVNSTESRLT (157 aa). In terms of domain architecture, GOLD spans 41–123; the sequence is KECLYYDMVT…LKKVEITLEK (83 aa). Residues 183-203 traverse the membrane as a helical segment; the sequence is WLSILIIIIIAVISIAQVLLI. Residues 204-215 lie on the Cytoplasmic side of the membrane; it reads QFLFTGRQKNYV.

The protein belongs to the EMP24/GP25L family. Associates with EMP24, ERV25 and ERP1.

The protein localises to the endoplasmic reticulum membrane. Involved in vesicular protein trafficking. The polypeptide is Protein ERP2 (ERP2) (Saccharomyces cerevisiae (strain ATCC 204508 / S288c) (Baker's yeast)).